The primary structure comprises 428 residues: Phosphoribosylamine--glycine ligase (428 aa).

Positions 109–316 constitute an ATP-grasp domain; sequence KDFLARHNIP…LVELCLAGTQ (208 aa). ATP is bound at residue 135–196; it reads VRQKGAPIVI…EEFLDGEEAS (62 aa). 2 residues coordinate Mg(2+): glutamate 286 and asparagine 288.

This sequence belongs to the GARS family. The cofactor is Mg(2+). It depends on Mn(2+) as a cofactor.

The enzyme catalyses 5-phospho-beta-D-ribosylamine + glycine + ATP = N(1)-(5-phospho-beta-D-ribosyl)glycinamide + ADP + phosphate + H(+). It participates in purine metabolism; IMP biosynthesis via de novo pathway; N(1)-(5-phospho-D-ribosyl)glycinamide from 5-phospho-alpha-D-ribose 1-diphosphate: step 2/2. In Yersinia pestis, this protein is Phosphoribosylamine--glycine ligase.